Here is a 97-residue protein sequence, read N- to C-terminus: Conotoxin Cal6.1a (97 aa).

The first 22 residues, 1-22 (MKLTTVLVVALLVLAACQFTVT), serve as a signal peptide directing secretion. The tract at residues 23-46 (DNSGDDPENPSLRSVGENQNPDST) is disordered. A propeptide spanning residues 23–68 (DNSGDDPENPSLRSVGENQNPDSTKTITAWATRDMTNMRRGLNRPS) is cleaved from the precursor. 3 disulfide bridges follow: Cys-71-Cys-87, Cys-78-Cys-91, and Cys-86-Cys-96.

The protein belongs to the conotoxin O1 superfamily. Expressed by the venom duct.

It is found in the secreted. Its function is as follows. Probable neurotoxin with unknown target. Possibly targets ion channels. This is Conotoxin Cal6.1a from Californiconus californicus (California cone).